The chain runs to 1983 residues: Nonribosomal peptide synthetase verP (1983 aa).

The tract at residues 11-405 (FAQAASRCPD…FRGRKDRTVK (395 aa)) is adenylation 1. Residues 526–602 (DRHLDTLLTV…DVAPLITSRA (77 aa)) form the Carrier 1 domain. S563 is subject to O-(pantetheine 4'-phosphoryl)serine. Residues 769–1047 (ETDELTVVLT…GQHFKHALYS (279 aa)) form a condensation 1 region. An adenylation 2 region spans residues 1089 to 1469 (QVMGQFPSLI…GRIDRLVKLR (381 aa)). One can recognise a Carrier 2 domain in the interval 1584–1662 (ITRPKIEDKL…DQINMVRALL (79 aa)). O-(pantetheine 4'-phosphoryl)serine is present on S1622. Positions 1652-1976 (KDQINMVRAL…GGLEHPLFEC (325 aa)) are condensation 2.

Belongs to the NRP synthetase family.

Its pathway is mycotoxin biosynthesis. Nonribosomal peptide synthetase; part of the gene cluster that mediates the biosynthesis of 11'-deoxyverticillin A, one of the dimeric epipolythiodioxopiperazines (ETPs) from the verticillin family that act as mycotoxins. 11'-deoxyverticillin A is required for normal conidiation. The nonribosomal peptide synthetase verP is speculated to be responsible for condensation of amino acids to form the carbon skeleton of verticillin, whereas the cluster-specific tailoring enzymes are involved in further modifications leading to the production of 11'-deoxyverticillin A. In Clonostachys rogersoniana, this protein is Nonribosomal peptide synthetase verP.